A 246-amino-acid polypeptide reads, in one-letter code: Proteasome subunit alpha (246 aa).

The protein belongs to the peptidase T1A family. The 20S proteasome core is composed of 14 alpha and 14 beta subunits that assemble into four stacked heptameric rings, resulting in a barrel-shaped structure. The two inner rings, each composed of seven catalytic beta subunits, are sandwiched by two outer rings, each composed of seven alpha subunits. The catalytic chamber with the active sites is on the inside of the barrel. Has a gated structure, the ends of the cylinder being occluded by the N-termini of the alpha-subunits. Is capped by the proteasome-associated ATPase, ARC. Can also interact with the bacterial proteasome activator Bpa through the C-terminal hydrophobic-tyrosine-X motif (HbYX motif) of Bpa; Bpa forms a homooligomeric ring-like structure which stacks co-axially with the proteasomal alpha-rings. Post-translationally, pupylated at an undetermined lysine residue by the prokaryotic ubiquitin-like protein Pup with the help of the ligase PafA, which leads to its degradation by the proteasome and thereby constitutes a negative auto-regulation.

It localises to the cytoplasm. The protein operates within protein degradation; proteasomal Pup-dependent pathway. Its activity is regulated as follows. The formation of the proteasomal ATPase ARC-20S proteasome complex, likely via the docking of the C-termini of ARC into the intersubunit pockets in the alpha-rings, may trigger opening of the gate for substrate entry. Interconversion between the open-gate and close-gate conformations leads to a dynamic regulation of the 20S proteasome proteolysis activity. PPS auto-regulates its own activity via pupylation and degradation of its components. Peptidolytic activity is inhibited by N-acetyl-Leu-Leu-norleucinal (Ac-LLnL) in vitro. Component of the proteasome core, a large protease complex with broad specificity involved in protein degradation. The M.smegmatis proteasome is able to cleave oligopeptides after hydrophobic residues, thus displaying chymotrypsin-like activity. In complex with the ATPase Mpa, degrades protein targets conjugated to a prokaryotic ubiquitin-like protein (Pup). Identified substrates of the M.smegmatis proteasome are the pupylated SodA and Ino1 proteins. The Pup-proteasome system (PPS) is essential for survival under starvation; PPS likely functions to recycle amino acids under nitrogen starvation, thereby enabling the cell to maintain basal metabolic activities. The protein is Proteasome subunit alpha of Mycolicibacterium smegmatis (strain ATCC 700084 / mc(2)155) (Mycobacterium smegmatis).